The primary structure comprises 261 residues: Hemin import ATP-binding protein HmuV (261 aa).

Residues L7–K243 enclose the ABC transporter domain. An ATP-binding site is contributed by G39–S46.

It belongs to the ABC transporter superfamily. Heme (hemin) importer (TC 3.A.1.14.5) family. The complex is composed of two ATP-binding proteins (HmuV), two transmembrane proteins (HmuU) and a solute-binding protein (HmuT).

The protein resides in the cell inner membrane. Part of the ABC transporter complex HmuTUV involved in hemin import. Responsible for energy coupling to the transport system. The chain is Hemin import ATP-binding protein HmuV from Vibrio vulnificus (strain CMCP6).